A 467-amino-acid chain; its full sequence is Glycosyl hydrolase family 109 protein 1 (467 aa).

The N-terminal stretch at 1–22 (MKKLLLNTLIGLALLTCQTSFA) is a signal peptide. Residues 66 to 67 (MR), Asp-88, 137 to 140 (WKHH), 157 to 158 (EV), and Asn-186 contribute to the NAD(+) site. Residues Tyr-215, Arg-231, 243 to 246 (YATH), and Tyr-321 contribute to the substrate site. Residue Tyr-243 participates in NAD(+) binding.

It belongs to the Gfo/Idh/MocA family. Glycosyl hydrolase 109 subfamily. The cofactor is NAD(+).

Glycosidase. This chain is Glycosyl hydrolase family 109 protein 1, found in Bacteroides thetaiotaomicron (strain ATCC 29148 / DSM 2079 / JCM 5827 / CCUG 10774 / NCTC 10582 / VPI-5482 / E50).